A 340-amino-acid polypeptide reads, in one-letter code: Formimidoylglutamase (340 aa).

Mn(2+) is bound by residues His129, Asp160, His162, Asp164, Asp257, and Asp259.

It belongs to the arginase family. Mn(2+) serves as cofactor.

It carries out the reaction N-formimidoyl-L-glutamate + H2O = formamide + L-glutamate. The protein operates within amino-acid degradation; L-histidine degradation into L-glutamate; L-glutamate from N-formimidoyl-L-glutamate (hydrolase route): step 1/1. Functionally, catalyzes the conversion of N-formimidoyl-L-glutamate to L-glutamate and formamide. This is Formimidoylglutamase from Vibrio parahaemolyticus serotype O3:K6 (strain RIMD 2210633).